We begin with the raw amino-acid sequence, 400 residues long: Phosphoglycerate kinase (400 aa).

Residues 24-26 (DFN), R40, 63-66 (HFGR), R121, and R154 contribute to the substrate site. ATP contacts are provided by residues K205, G296, E327, and 356 to 359 (GGDS).

The protein belongs to the phosphoglycerate kinase family. As to quaternary structure, monomer.

The protein resides in the cytoplasm. The enzyme catalyses (2R)-3-phosphoglycerate + ATP = (2R)-3-phospho-glyceroyl phosphate + ADP. It functions in the pathway carbohydrate degradation; glycolysis; pyruvate from D-glyceraldehyde 3-phosphate: step 2/5. In Thermosynechococcus vestitus (strain NIES-2133 / IAM M-273 / BP-1), this protein is Phosphoglycerate kinase.